Consider the following 88-residue polypeptide: Small ribosomal subunit protein uS15c (88 aa).

This sequence belongs to the universal ribosomal protein uS15 family. Part of the 30S ribosomal subunit.

It is found in the plastid. It localises to the chloroplast. This Arabidopsis thaliana (Mouse-ear cress) protein is Small ribosomal subunit protein uS15c (rps15).